The chain runs to 292 residues: Diaminopimelate epimerase (292 aa).

The substrate site is built by Asn-13, Gln-46, and Asn-66. Cys-75 (proton donor) is an active-site residue. Substrate-binding positions include 76–77, Asn-170, Asn-203, and 221–222; these read GN and ER. The Proton acceptor role is filled by Cys-230. 231–232 serves as a coordination point for substrate; sequence GT.

This sequence belongs to the diaminopimelate epimerase family. Homodimer.

The protein resides in the cytoplasm. It carries out the reaction (2S,6S)-2,6-diaminopimelate = meso-2,6-diaminopimelate. The protein operates within amino-acid biosynthesis; L-lysine biosynthesis via DAP pathway; DL-2,6-diaminopimelate from LL-2,6-diaminopimelate: step 1/1. Catalyzes the stereoinversion of LL-2,6-diaminopimelate (L,L-DAP) to meso-diaminopimelate (meso-DAP), a precursor of L-lysine and an essential component of the bacterial peptidoglycan. This Acidovorax ebreus (strain TPSY) (Diaphorobacter sp. (strain TPSY)) protein is Diaminopimelate epimerase.